A 97-amino-acid chain; its full sequence is Carboxysome shell protein CsoS1B (97 aa).

A BMC domain is found at 8 to 93; the sequence is ALGMIETRGL…PHKEVEPVLT (86 aa).

It belongs to the bacterial microcompartments protein family. CsoS1 subfamily. As to quaternary structure, homohexamer with a small central pore.

It is found in the carboxysome. Functionally, one of shell proteins of the carboxysome, a polyhedral inclusion where RuBisCO (ribulose bisphosphate carboxylase, ccbL-ccbS) is sequestered. Assembles into hexamers which make sheets that form the facets of the polyhedral carboxysome. The shell probably limits the diffusion of CO(2) into and out of the carboxysome. The protein is Carboxysome shell protein CsoS1B of Hydrogenovibrio crunogenus (strain DSM 25203 / XCL-2) (Thiomicrospira crunogena).